The following is a 668-amino-acid chain: Fructose-1,6-bisphosphatase class 3 (668 aa).

The protein belongs to the FBPase class 3 family. Mn(2+) is required as a cofactor.

The enzyme catalyses beta-D-fructose 1,6-bisphosphate + H2O = beta-D-fructose 6-phosphate + phosphate. It participates in carbohydrate biosynthesis; gluconeogenesis. This Clostridium botulinum (strain Okra / Type B1) protein is Fructose-1,6-bisphosphatase class 3.